Here is a 68-residue protein sequence, read N- to C-terminus: Conotoxin Cal14.13c (68 aa).

The first 20 residues, 1–20, serve as a signal peptide directing secretion; sequence MKLCVVXVLLMLAMPFNGGE. Positions 21-68 are excised as a propeptide; sequence ASRFFNQHARSQRSGMKTRGIWCDPPCPEGETCRGGECSDEFNGDLGG. A Leucine amide modification is found at leucine 66.

In terms of processing, contains 2 disulfide bonds. As to expression, expressed by the venom duct.

It localises to the secreted. Its function is as follows. Probable neurotoxin with unknown target. Possibly targets ion channels. The chain is Conotoxin Cal14.13c from Californiconus californicus (California cone).